The following is a 680-amino-acid chain: DNA ligase (680 aa).

NAD(+)-binding positions include 44–48 (DHVYD), 93–94 (SM), and Glu125. Lys127 (N6-AMP-lysine intermediate) is an active-site residue. Residues Arg148, Glu182, Lys298, and Lys322 each coordinate NAD(+). Cys416, Cys419, Cys434, and Cys439 together coordinate Zn(2+). A BRCT domain is found at 600–680 (NPDSEWNGRR…QFSQAMKEEQ (81 aa)).

The protein belongs to the NAD-dependent DNA ligase family. LigA subfamily. Mg(2+) is required as a cofactor. Mn(2+) serves as cofactor.

The enzyme catalyses NAD(+) + (deoxyribonucleotide)n-3'-hydroxyl + 5'-phospho-(deoxyribonucleotide)m = (deoxyribonucleotide)n+m + AMP + beta-nicotinamide D-nucleotide.. DNA ligase that catalyzes the formation of phosphodiester linkages between 5'-phosphoryl and 3'-hydroxyl groups in double-stranded DNA using NAD as a coenzyme and as the energy source for the reaction. It is essential for DNA replication and repair of damaged DNA. The polypeptide is DNA ligase (Limosilactobacillus reuteri (strain DSM 20016) (Lactobacillus reuteri)).